Reading from the N-terminus, the 198-residue chain is Na(+)-translocating NADH-quinone reductase subunit E (198 aa).

Transmembrane regions (helical) follow at residues 11–31, 35–55, 77–97, 110–130, 140–160, and 176–196; these read SVFI…FLAV, VSTA…AVPA, FLNF…LEMI, GIFL…SFMV, VVYG…LAGL, and LGIT…FSGI.

This sequence belongs to the NqrDE/RnfAE family. In terms of assembly, composed of six subunits; NqrA, NqrB, NqrC, NqrD, NqrE and NqrF.

It localises to the cell inner membrane. The enzyme catalyses a ubiquinone + n Na(+)(in) + NADH + H(+) = a ubiquinol + n Na(+)(out) + NAD(+). In terms of biological role, NQR complex catalyzes the reduction of ubiquinone-1 to ubiquinol by two successive reactions, coupled with the transport of Na(+) ions from the cytoplasm to the periplasm. NqrA to NqrE are probably involved in the second step, the conversion of ubisemiquinone to ubiquinol. The chain is Na(+)-translocating NADH-quinone reductase subunit E from Actinobacillus pleuropneumoniae serotype 5b (strain L20).